A 758-amino-acid chain; its full sequence is Vitamin K-dependent gamma-carboxylase (758 aa).

The disordered stretch occupies residues 1–29; it reads MAVHRGSARAAPASDKVQKNKPAQTSGLE. Ala-2 bears the N-acetylalanine mark. The Cytoplasmic portion of the chain corresponds to 2-60; that stretch reads AVHRGSARAAPASDKVQKNKPAQTSGLEQGSRMARIFGFEWADLSSWQSVVTLLNRPTD. A helical transmembrane segment spans residues 61-81; that stretch reads PANLAVFRFLFAFLMLLDIPQ. Residues 82-113 are Lumenal-facing; that stretch reads ERGLSSLDRKYLDGLDVCRFPLLDALRPLPLD. Cys-99 and Cys-450 form a disulfide bridge. A helical transmembrane segment spans residues 114-134; sequence WMYLVYTIMFLGALGMMLGLW. The Cytoplasmic segment spans residues 135-136; it reads YR. A helical membrane pass occupies residues 137–157; sequence LSCMLFLLPYWYVFLLDKTSW. Residues 158 to 292 lie on the Lumenal side of the membrane; it reads NNHSYLYGLL…VSYFHCMNSQ (135 aa). Residues 293 to 313 form a helical membrane-spanning segment; that stretch reads LFSIGMFPYVMLASSPLFCSA. The Cytoplasmic portion of the chain corresponds to 314–361; sequence EWPRKLVARCPKRLQELLPAKAAPRPSASCVYKRARAKAGQKPGLRHH. Residues 362–382 form a helical membrane-spanning segment; the sequence is LGTVFTLLYLLEQLFLPYSHF. Over 383–758 the chain is Lumenal; the sequence is LTQGYNNWTN…PDSEHVHSEL (376 aa). A disordered region spans residues 727-758; sequence PFEPVDESSASNTDSSDPHPSEPDSEHVHSEL. Basic and acidic residues predominate over residues 742-758; it reads SDPHPSEPDSEHVHSEL.

The protein belongs to the vitamin K-dependent gamma-carboxylase family. In terms of assembly, monomer. Interacts with CALU.

The protein localises to the endoplasmic reticulum membrane. The enzyme catalyses 4-carboxy-L-glutamyl-[protein] + 2,3-epoxyphylloquinone + H2O + H(+) = phylloquinol + L-glutamyl-[protein] + CO2 + O2. In terms of biological role, mediates the vitamin K-dependent carboxylation of glutamate residues to calcium-binding gamma-carboxyglutamate (Gla) residues with the concomitant conversion of the reduced hydroquinone form of vitamin K to vitamin K epoxide. Catalyzes gamma-carboxylation of various proteins, such as blood coagulation factors (F2, F7, F9 and F10), osteocalcin (BGLAP) or matrix Gla protein (MGP). This chain is Vitamin K-dependent gamma-carboxylase (Ggcx), found in Rattus norvegicus (Rat).